Reading from the N-terminus, the 510-residue chain is NKAP family protein (510 aa).

Residues 1-22 (MSHRERDRDRDRDSDRDRDRNR) are compositionally biased toward basic and acidic residues. 3 disordered regions span residues 1–128 (MSHR…VEIQ), 149–220 (ERKD…NYNG), and 239–401 (VYER…PISE). Residues 23–39 (YSRSRSRGSRSRSRSRS) show a composition bias toward basic residues. Over residues 40–89 (RSRDRNRNRDYNKDRSSNRDSYYNDRDYKKDRSSNRDRDYYDRDRNRDYK) the composition is skewed to basic and acidic residues. Residues 96 to 105 (SSGGGGGGSG) show a composition bias toward gly residues. Low complexity-rich tracts occupy residues 112–123 (SSSYRESNSNNS) and 184–219 (NNNN…SNYN). The segment covering 262–273 (NKKKSKKSRRKS) has biased composition (basic residues). Residues 274–283 (SSNSDSSSSD) show a composition bias toward low complexity. Residues 292–322 (REKRKKSKSRKDKKKRKEKKKHQRKSSKRSS) are compositionally biased toward basic residues. Residues 342–351 (DSDRSDSEGR) show a composition bias toward basic and acidic residues. Positions 352–367 (SRKKRSKKRSKKRHDH) are enriched in basic residues. Residues 368–383 (HKESVHDASMWEEKVE) are compositionally biased toward basic and acidic residues.

This sequence belongs to the NKAP family.

In Dictyostelium discoideum (Social amoeba), this protein is NKAP family protein.